The primary structure comprises 131 residues: Small ribosomal subunit protein uS8 (131 aa).

The protein belongs to the universal ribosomal protein uS8 family. In terms of assembly, part of the 30S ribosomal subunit. Contacts proteins S5 and S12.

Its function is as follows. One of the primary rRNA binding proteins, it binds directly to 16S rRNA central domain where it helps coordinate assembly of the platform of the 30S subunit. The chain is Small ribosomal subunit protein uS8 from Bacteroides thetaiotaomicron (strain ATCC 29148 / DSM 2079 / JCM 5827 / CCUG 10774 / NCTC 10582 / VPI-5482 / E50).